The chain runs to 337 residues: Ornithine carbamoyltransferase, catabolic (337 aa).

Carbamoyl phosphate contacts are provided by residues 58–61, glutamine 85, arginine 109, and 135–138; these read STRT and HPTQ. L-ornithine is bound by residues asparagine 167, aspartate 231, and 235-236; that span reads SM. Carbamoyl phosphate is bound by residues 272–273 and arginine 317; that span reads CL.

It belongs to the aspartate/ornithine carbamoyltransferase superfamily. OTCase family.

It localises to the cytoplasm. It carries out the reaction carbamoyl phosphate + L-ornithine = L-citrulline + phosphate + H(+). It functions in the pathway amino-acid degradation; L-arginine degradation via ADI pathway; carbamoyl phosphate from L-arginine: step 2/2. Its function is as follows. Reversibly catalyzes the transfer of the carbamoyl group from carbamoyl phosphate (CP) to the N(epsilon) atom of ornithine (ORN) to produce L-citrulline. This chain is Ornithine carbamoyltransferase, catabolic (arcB), found in Latilactobacillus sakei (Lactobacillus sakei).